Reading from the N-terminus, the 99-residue chain is MMNMQNMMKQAQKLQKQMEQKQADLAAMQFTGKSAQELVTATFTGDKQLVSIDFKEAVVDPEDIETLQDMTAQAINAALAQIDEATKKTLGAFAGKLPF.

It belongs to the YbaB/EbfC family. Homodimer.

It is found in the cytoplasm. It localises to the nucleoid. Binds to DNA and alters its conformation. May be involved in regulation of gene expression, nucleoid organization and DNA protection. This Streptococcus equi subsp. equi (strain 4047) protein is Nucleoid-associated protein SEQ_0368.